Reading from the N-terminus, the 270-residue chain is 4-hydroxy-tetrahydrodipicolinate reductase (270 aa).

NAD(+)-binding positions include Gly8–Met13 and Glu34. Arg35 serves as a coordination point for NADP(+). NAD(+) contacts are provided by residues Gly98 to Thr100 and Ser122 to Met125. The active-site Proton donor/acceptor is the His155. His156 is a binding site for (S)-2,3,4,5-tetrahydrodipicolinate. The Proton donor role is filled by Lys159. Gly165–Thr166 is a (S)-2,3,4,5-tetrahydrodipicolinate binding site.

It belongs to the DapB family.

It localises to the cytoplasm. It catalyses the reaction (S)-2,3,4,5-tetrahydrodipicolinate + NAD(+) + H2O = (2S,4S)-4-hydroxy-2,3,4,5-tetrahydrodipicolinate + NADH + H(+). It carries out the reaction (S)-2,3,4,5-tetrahydrodipicolinate + NADP(+) + H2O = (2S,4S)-4-hydroxy-2,3,4,5-tetrahydrodipicolinate + NADPH + H(+). It participates in amino-acid biosynthesis; L-lysine biosynthesis via DAP pathway; (S)-tetrahydrodipicolinate from L-aspartate: step 4/4. Functionally, catalyzes the conversion of 4-hydroxy-tetrahydrodipicolinate (HTPA) to tetrahydrodipicolinate. This Anaeromyxobacter dehalogenans (strain 2CP-C) protein is 4-hydroxy-tetrahydrodipicolinate reductase.